A 310-amino-acid polypeptide reads, in one-letter code: Pantoate--beta-alanine ligase (310 aa).

An ATP-binding site is contributed by 32 to 39; it reads MGYLHEGH. The active-site Proton donor is His39. Gln63 contributes to the (R)-pantoate binding site. A beta-alanine-binding site is contributed by Gln63. An ATP-binding site is contributed by 175–178; it reads GKKD. Gln181 serves as a coordination point for (R)-pantoate. 212–215 is an ATP binding site; the sequence is MSSR.

The protein belongs to the pantothenate synthetase family. Homodimer. In terms of tissue distribution, expressed in roots, cotyledons, leaves, stems, cauline leaves, stigma, sepals and petals.

It localises to the cytoplasm. Its subcellular location is the cytosol. It catalyses the reaction (R)-pantoate + beta-alanine + ATP = (R)-pantothenate + AMP + diphosphate + H(+). It participates in cofactor biosynthesis; (R)-pantothenate biosynthesis; (R)-pantothenate from (R)-pantoate and beta-alanine: step 1/1. Enzyme kinetics do not match Michaelis-Menten kinetics, suggesting allosteric behavior. Inhibited by high pantoate levels. Catalyzes the condensation of pantoate with beta-alanine to form pantothenate. Essential for panthotenate biosynthesis. This Arabidopsis thaliana (Mouse-ear cress) protein is Pantoate--beta-alanine ligase.